Consider the following 298-residue polypeptide: ATP synthase gamma chain (298 aa).

The protein belongs to the ATPase gamma chain family. In terms of assembly, F-type ATPases have 2 components, CF(1) - the catalytic core - and CF(0) - the membrane proton channel. CF(1) has five subunits: alpha(3), beta(3), gamma(1), delta(1), epsilon(1). CF(0) has three main subunits: a, b and c.

It localises to the cell membrane. In terms of biological role, produces ATP from ADP in the presence of a proton gradient across the membrane. The gamma chain is believed to be important in regulating ATPase activity and the flow of protons through the CF(0) complex. The chain is ATP synthase gamma chain from Parafrankia sp. (strain EAN1pec).